A 110-amino-acid chain; its full sequence is Protein YcgL (110 aa).

A YcgL domain is found at 14–98 (MFCVIYRSSK…PPEDLLKQHL (85 aa)).

This is Protein YcgL from Salmonella arizonae (strain ATCC BAA-731 / CDC346-86 / RSK2980).